Consider the following 250-residue polypeptide: NAD(P)H-quinone oxidoreductase subunit S, chloroplastic (250 aa).

Residues 1-48 (MATSSITIPTIRTPIHRSKFLGQTHQFSTVNRSVFPPPKQQSKLYQVK) constitute a chloroplast transit peptide. A Glycyl lysine isopeptide (Lys-Gly) (interchain with G-Cter in ubiquitin) cross-link involves residue K52. 2 stretches are compositionally biased toward basic and acidic residues: residues 76–94 (QRNI…NETE) and 106–115 (VPEDGFEKEM). 2 disordered regions span residues 76–163 (QRNI…KPKA) and 222–250 (REKG…EAAP). Residues 136-146 (NPPPPPPPPPA) show a composition bias toward pro residues.

As to quaternary structure, part of the chloroplast NDH complex, composed of a mixture of chloroplast and nucleus encoded subunits. Component of the electron donor-binding subcomplex, at least composed of NDHS, NDHT and NDHU. Interacts with the NDH subcomplex A via the protein NDHT and NDHU. Arg-193 is the critical site for the high affinity binding of NDH to ferredoxin.

Its subcellular location is the plastid. It is found in the chloroplast thylakoid membrane. It carries out the reaction a plastoquinone + NADH + (n+1) H(+)(in) = a plastoquinol + NAD(+) + n H(+)(out). It catalyses the reaction a plastoquinone + NADPH + (n+1) H(+)(in) = a plastoquinol + NADP(+) + n H(+)(out). NDH shuttles electrons from NAD(P)H:plastoquinone, via FMN and iron-sulfur (Fe-S) centers, to quinones in the photosynthetic chain and possibly in a chloroplast respiratory chain. The immediate electron acceptor for the enzyme in this species is believed to be plastoquinone. Couples the redox reaction to proton translocation, and thus conserves the redox energy in a proton gradient. Required for the efficient operation of ferredoxin-dependent plastoquinone reduction. Forms the electron donor-binding subcomplex in association with the NDHT and NDHU subunits. The chain is NAD(P)H-quinone oxidoreductase subunit S, chloroplastic from Arabidopsis thaliana (Mouse-ear cress).